The following is a 169-amino-acid chain: PTS system glucose-specific EIIA component (169 aa).

The 105-residue stretch at 39-143 folds into the PTS EIIA type-1 domain; it reads DVVFAEKIVG…STLTPVVISN (105 aa). H76 and H91 together coordinate Zn(2+). H91 functions as the Tele-phosphohistidine intermediate; for EIIA activity in the catalytic mechanism. H91 carries the post-translational modification Phosphohistidine; by HPr.

As to quaternary structure, heterodimer with glycerol kinase (glpk). Requires Zn(2+) as cofactor.

The protein localises to the cytoplasm. Functionally, the phosphoenolpyruvate-dependent sugar phosphotransferase system (sugar PTS), a major carbohydrate active transport system, catalyzes the phosphorylation of incoming sugar substrates concomitantly with their translocation across the cell membrane. The enzyme II complex composed of PtsG and Crr is involved in glucose transport. The polypeptide is PTS system glucose-specific EIIA component (crr) (Escherichia coli O6:H1 (strain CFT073 / ATCC 700928 / UPEC)).